The chain runs to 493 residues: Alpha-amylase-related protein (493 aa).

The first 19 residues, 1-19 (MFKLALTLTLCLAGSLSLA), serve as a signal peptide directing secretion. Position 20 is a pyrrolidone carboxylic acid (Q20). The cysteines at positions 47 and 103 are disulfide-linked. Ca(2+) contacts are provided by N117, Q168, and D177. Residues C156 and C170 are joined by a disulfide bond. R205 is a chloride binding site. The active-site Nucleophile is D207. H211 provides a ligand contact to Ca(2+). E244 (proton donor) is an active-site residue. Chloride contacts are provided by N307 and R342. 3 disulfide bridges follow: C375–C381, C417–C440, and C447–C459.

The protein belongs to the glycosyl hydrolase 13 family. Monomer. The cofactor is Ca(2+). Chloride is required as a cofactor.

The protein resides in the secreted. It carries out the reaction Endohydrolysis of (1-&gt;4)-alpha-D-glucosidic linkages in polysaccharides containing three or more (1-&gt;4)-alpha-linked D-glucose units.. This is Alpha-amylase-related protein (Amyrel) from Drosophila yakuba (Fruit fly).